A 403-amino-acid polypeptide reads, in one-letter code: L-cysteine:1D-myo-inositol 2-amino-2-deoxy-alpha-D-glucopyranoside ligase (403 aa).

C43 is a Zn(2+) binding site. Residues 43 to 46 (CGIT), T58, 81 to 83 (NVT), and W223 contribute to the L-cysteinyl-5'-AMP site. A 'HIGH' region motif is present at residues 45-55 (ITPYDATHLGH). Zn(2+) is bound at residue C227. 245–247 (GAD) is a binding site for L-cysteinyl-5'-AMP. H252 provides a ligand contact to Zn(2+). V278 contacts L-cysteinyl-5'-AMP. The 'KMSKS' region signature appears at 284 to 288 (KMSKS).

It belongs to the class-I aminoacyl-tRNA synthetase family. MshC subfamily. In terms of assembly, monomer. Zn(2+) is required as a cofactor.

It carries out the reaction 1D-myo-inositol 2-amino-2-deoxy-alpha-D-glucopyranoside + L-cysteine + ATP = 1D-myo-inositol 2-(L-cysteinylamino)-2-deoxy-alpha-D-glucopyranoside + AMP + diphosphate + H(+). Its function is as follows. Catalyzes the ATP-dependent condensation of GlcN-Ins and L-cysteine to form L-Cys-GlcN-Ins. The sequence is that of L-cysteine:1D-myo-inositol 2-amino-2-deoxy-alpha-D-glucopyranoside ligase from Acidothermus cellulolyticus (strain ATCC 43068 / DSM 8971 / 11B).